The sequence spans 729 residues: Heterogeneous nuclear ribonucleoprotein M (729 aa).

Residues 1–13 (MAAGVEAAAEVAA) show a composition bias toward low complexity. The disordered stretch occupies residues 1–65 (MAAGVEAAAE…GGNRFEPYSN (65 aa)). Ala-2 is modified (N-acetylalanine). A Glycyl lysine isopeptide (Lys-Gly) (interchain with G-Cter in SUMO2) cross-link involves residue Lys-17. A Phosphoserine modification is found at Ser-29. Glycyl lysine isopeptide (Lys-Gly) (interchain with G-Cter in SUMO2) cross-links involve residues Lys-37, Lys-68, and Lys-82. Over residues 37–49 (KGEERPTQNEKRK) the composition is skewed to basic and acidic residues. RRM domains lie at 70-148 (YRAF…EDPD) and 203-280 (STVF…MDER). At Ser-85 the chain carries Phosphoserine. Glycyl lysine isopeptide (Lys-Gly) (interchain with G-Cter in SUMO2) cross-links involve residues Lys-87 and Lys-126. Residue Lys-133 is modified to N6-acetyllysine; alternate. Lys-133 is covalently cross-linked (Glycyl lysine isopeptide (Lys-Gly) (interchain with G-Cter in SUMO2); alternate). Residues Lys-142 and Lys-144 each participate in a glycyl lysine isopeptide (Lys-Gly) (interchain with G-Cter in SUMO2) cross-link. Ser-203 is modified (phosphoserine). Lys-220 participates in a covalent cross-link: Glycyl lysine isopeptide (Lys-Gly) (interchain with G-Cter in SUMO2). Lys-276 carries the N6-acetyllysine; alternate modification. A Glycyl lysine isopeptide (Lys-Gly) (interchain with G-Cter in SUMO2); alternate cross-link involves residue Lys-276. Glycyl lysine isopeptide (Lys-Gly) (interchain with G-Cter in SUMO2) cross-links involve residues Lys-284 and Lys-344. A phosphoserine mark is found at Ser-364 and Ser-376. Residues Lys-380 and Lys-387 each participate in a glycyl lysine isopeptide (Lys-Gly) (interchain with G-Cter in SUMO2) cross-link. Phosphoserine is present on Ser-396. A run of 4 repeats spans residues 399–404 (GIERMG), 406–411 (GIDRIS), 414–419 (GMERMG), and 425–430 (GMDRVG). Residues 399-607 (GIERMGPGID…ALGAGIERMG (209 aa)) form a 27 X 6 AA repeats of [GEVSTPAN]-[ILMV]-[DE]-[RH]-[MLVI]-[GAV] region. Ser-431 bears the Phosphoserine mark. 3 repeat units span residues 432–437 (EIERMG), 439–444 (VMDRMG), and 445–450 (SVERMG). Phosphoserine is present on Ser-451. A run of 4 repeats spans residues 452–457 (SIERMG), 460–465 (GLDHMA), 467–472 (SIERMG), and 474–479 (TMERIG). The residue at position 467 (Ser-467) is a Phosphoserine. Residue Ser-480 is modified to Phosphoserine. 16 tandem repeats follow at residues 481–486 (GVERMG), 492–497 (GLERMA), 499–504 (PIDRVG), 506–511 (TIERMG), 513–518 (GVERMG), 520–525 (AIERMG), 527–532 (SMDRMV), 539–544 (SLERMG), 546–551 (VMDRMA), 553–558 (GLERMG), 561–566 (NLERMG), 567–571 (LERMG), 574–579 (SLERMG), 580–584 (LERMG), 587–592 (SLERMG), and 602–607 (GIERMG). Arg-495 carries the omega-N-methylarginine modification. Ser-527 is subject to Phosphoserine. Ser-574 bears the Phosphoserine mark. The residue at position 587 (Ser-587) is a Phosphoserine. 3 positions are modified to phosphoserine: Ser-617, Ser-632, and Ser-636. Lys-650 participates in a covalent cross-link: Glycyl lysine isopeptide (Lys-Gly) (interchain with G-Cter in SUMO2). The 77-residue stretch at 652 to 728 (CQIFVRNLPF…REIDVRIDRN (77 aa)) folds into the RRM 3 domain. Thr-664 is subject to Phosphothreonine. Residue Lys-666 forms a Glycyl lysine isopeptide (Lys-Gly) (interchain with G-Cter in SUMO2) linkage. At Lys-671 the chain carries N6-acetyllysine. Glycyl lysine isopeptide (Lys-Gly) (interchain with G-Cter in SUMO2) cross-links involve residues Lys-684 and Lys-691. An N6-acetyllysine; alternate modification is found at Lys-697. Residue Lys-697 forms a Glycyl lysine isopeptide (Lys-Gly) (interchain with G-Cter in SUMO2); alternate linkage. Residue Lys-697 forms a Glycyl lysine isopeptide (Lys-Gly) (interchain with G-Cter in SUMO1); alternate linkage. Phosphoserine is present on Ser-700. Residue Lys-715 forms a Glycyl lysine isopeptide (Lys-Gly) (interchain with G-Cter in SUMO2) linkage.

As to quaternary structure, identified in the spliceosome C complex. Interacts with PPIA/CYPA. Sumoylated.

The protein resides in the nucleus. Its function is as follows. Pre-mRNA binding protein in vivo, binds avidly to poly(G) and poly(U) RNA homopolymers in vitro. Involved in splicing. Acts as a receptor for carcinoembryonic antigen in Kupffer cells, may initiate a series of signaling events leading to tyrosine phosphorylation of proteins and induction of IL-1 alpha, IL-6, IL-10 and tumor necrosis factor alpha cytokines. In Mus musculus (Mouse), this protein is Heterogeneous nuclear ribonucleoprotein M (Hnrnpm).